We begin with the raw amino-acid sequence, 898 residues long: Netrin receptor UNC5A (898 aa).

A signal peptide spans 1 to 25; it reads MAVRPGLWPVLLGIVLAAWLRGSGA. Residues 26–361 lie on the Extracellular side of the membrane; that stretch reads QQSATVANPV…TASCPEDVAL (336 aa). The region spanning 44–141 is the Ig-like domain; sequence PHFLVEPEDV…SGTTKSQKAY (98 aa). 3 cysteine pairs are disulfide-bonded: cysteine 65–cysteine 126, cysteine 77–cysteine 124, and cysteine 170–cysteine 221. Asparagine 107 and asparagine 218 each carry an N-linked (GlcNAc...) asparagine glycan. In terms of domain architecture, Ig-like C2-type spans 155–238; that stretch reads PLAKEVSLEQ…RRRSTSAAVI (84 aa). TSP type-1 domains lie at 242–296 and 298–350; these read NGGW…TLCP and DGSW…DLCL. 3 C-linked (Man) tryptophan glycosylation sites follow: tryptophan 245, tryptophan 248, and tryptophan 251. Disulfide bonds link cysteine 254-cysteine 291, cysteine 258-cysteine 295, and cysteine 269-cysteine 281. C-linked (Man) tryptophan glycans are attached at residues tryptophan 301 and tryptophan 304. 3 disulfides stabilise this stretch: cysteine 310–cysteine 344, cysteine 314–cysteine 349, and cysteine 322–cysteine 334. The N-linked (GlcNAc...) asparagine glycan is linked to asparagine 343. The chain crosses the membrane as a helical span at residues 362-382; the sequence is YIGLVAVAVCLFLLLLALGLI. The Cytoplasmic portion of the chain corresponds to 383 to 898; that stretch reads YCRKKEGLDS…GLFTVSEAEC (516 aa). In terms of domain architecture, ZU5 spans 497-640; it reads NMAYGTFNFL…LGRFALVGEA (144 aa). The tract at residues 661-679 is interaction with DCC; sequence SLEYNIRVYCLHDTHDALK. Residues 817-897 form the Death domain; sequence QKIIASLDPP…AGLFTVSEAE (81 aa).

The protein belongs to the unc-5 family. As to quaternary structure, homodimer and homooligomer. Interacts with the cytoplasmic part of DCC. Interacts with MAGED1. Interacts with PRKCABP, possibly mediating some interaction with PKC. Interacts (via extracellular domain) with FLRT2 (via extracellular domain). Interacts (via extracellular domain) with FLRT3 (via extracellular domain). Phosphorylated on cytoplasmic tyrosine residues. Phosphorylated by PKC in vitro. Post-translationally, proteolytically cleaved by caspases during apoptosis. The cleavage does not take place when the receptor is associated with netrin ligand. Its cleavage by caspases is required to induce apoptosis. In terms of processing, the two extracellular TSRs of UNC5A contain WxxWxxWxxC motifs that can be C-mannosylated on all tryptophans. DPY19L1 preferentially mannosylates the first two tryptophans and DPY19L3 prefers the third. C-mannosylation by DPY19L1 is required for transport of UNC5A from the endoplasmic reticulum to the cell surface. Mainly expressed in regions of differentiating neurons. Expressed at early stages of neural tube development in the ventral spinal cord. In developing hindbrain, it colocalizes with a number of cranial motor neuron subpopulations from embryonic E11 to E14, while DCC is expressed by motor neurons at E12. Also expressed in non-neural structures, such as the basal plane of the hindbrain and midbrain, in the developing hypothalamus, thalamus and in the pallidum.

It localises to the cell membrane. The protein resides in the membrane raft. Its subcellular location is the cell projection. The protein localises to the neuron projection. Receptor for netrin required for axon guidance. Functions in the netrin signaling pathway and promotes neurite outgrowth in response to NTN1. Mediates axon repulsion of neuronal growth cones in the developing nervous system in response to netrin. Axon repulsion in growth cones may be mediated by its association with DCC that may trigger signaling for repulsion. It also acts as a dependence receptor required for apoptosis induction when not associated with netrin ligand. The polypeptide is Netrin receptor UNC5A (Unc5a) (Rattus norvegicus (Rat)).